Reading from the N-terminus, the 318-residue chain is tRNA dimethylallyltransferase (318 aa).

ATP is bound at residue 16-23 (GPTASGKT). 18–23 (TASGKT) provides a ligand contact to substrate. Interaction with substrate tRNA stretches follow at residues 41 to 44 (DSAL), 165 to 169 (QRINR), 246 to 251 (RCVGYR), and 279 to 286 (KRQITWLR).

This sequence belongs to the IPP transferase family. As to quaternary structure, monomer. Mg(2+) serves as cofactor.

It catalyses the reaction adenosine(37) in tRNA + dimethylallyl diphosphate = N(6)-dimethylallyladenosine(37) in tRNA + diphosphate. Functionally, catalyzes the transfer of a dimethylallyl group onto the adenine at position 37 in tRNAs that read codons beginning with uridine, leading to the formation of N6-(dimethylallyl)adenosine (i(6)A). The sequence is that of tRNA dimethylallyltransferase from Actinobacillus succinogenes (strain ATCC 55618 / DSM 22257 / CCUG 43843 / 130Z).